The chain runs to 251 residues: Triosephosphate isomerase (251 aa).

9–11 (NWK) provides a ligand contact to substrate. His96 functions as the Electrophile in the catalytic mechanism. Glu168 (proton acceptor) is an active-site residue. Residues Gly174, Ser214, and 235–236 (GG) contribute to the substrate site.

This sequence belongs to the triosephosphate isomerase family. As to quaternary structure, homodimer.

Its subcellular location is the cytoplasm. It catalyses the reaction D-glyceraldehyde 3-phosphate = dihydroxyacetone phosphate. It participates in carbohydrate biosynthesis; gluconeogenesis. Its pathway is carbohydrate degradation; glycolysis; D-glyceraldehyde 3-phosphate from glycerone phosphate: step 1/1. Functionally, involved in the gluconeogenesis. Catalyzes stereospecifically the conversion of dihydroxyacetone phosphate (DHAP) to D-glyceraldehyde-3-phosphate (G3P). The sequence is that of Triosephosphate isomerase from Porphyromonas gingivalis (strain ATCC 33277 / DSM 20709 / CIP 103683 / JCM 12257 / NCTC 11834 / 2561).